A 214-amino-acid chain; its full sequence is Pyridoxine/pyridoxamine 5'-phosphate oxidase (214 aa).

Residues 8–11 (RINY) and lysine 66 each bind substrate. Residues 61 to 66 (RILLIK), 76 to 77 (FT), arginine 82, lysine 83, and glutamine 105 contribute to the FMN site. Residues tyrosine 123, arginine 127, and serine 131 each coordinate substrate. FMN-binding positions include 140–141 (QS) and tryptophan 184. 190-192 (RLH) serves as a coordination point for substrate. Arginine 194 contacts FMN.

The protein belongs to the pyridoxamine 5'-phosphate oxidase family. Homodimer. FMN is required as a cofactor.

The enzyme catalyses pyridoxamine 5'-phosphate + O2 + H2O = pyridoxal 5'-phosphate + H2O2 + NH4(+). The catalysed reaction is pyridoxine 5'-phosphate + O2 = pyridoxal 5'-phosphate + H2O2. It functions in the pathway cofactor metabolism; pyridoxal 5'-phosphate salvage; pyridoxal 5'-phosphate from pyridoxamine 5'-phosphate: step 1/1. Its pathway is cofactor metabolism; pyridoxal 5'-phosphate salvage; pyridoxal 5'-phosphate from pyridoxine 5'-phosphate: step 1/1. In terms of biological role, catalyzes the oxidation of either pyridoxine 5'-phosphate (PNP) or pyridoxamine 5'-phosphate (PMP) into pyridoxal 5'-phosphate (PLP). The sequence is that of Pyridoxine/pyridoxamine 5'-phosphate oxidase from Burkholderia vietnamiensis (strain G4 / LMG 22486) (Burkholderia cepacia (strain R1808)).